Reading from the N-terminus, the 144-residue chain is 3-dehydroquinate dehydratase (144 aa).

The active-site Proton acceptor is the Y23. Substrate contacts are provided by N74, H80, and D87. H100 serves as the catalytic Proton donor. Residues 101–102 (LS) and R111 contribute to the substrate site.

The protein belongs to the type-II 3-dehydroquinase family. Homododecamer.

The catalysed reaction is 3-dehydroquinate = 3-dehydroshikimate + H2O. The protein operates within metabolic intermediate biosynthesis; chorismate biosynthesis; chorismate from D-erythrose 4-phosphate and phosphoenolpyruvate: step 3/7. Catalyzes a trans-dehydration via an enolate intermediate. The chain is 3-dehydroquinate dehydratase from Haemophilus ducreyi (strain 35000HP / ATCC 700724).